A 420-amino-acid chain; its full sequence is Transcription termination factor Rho (420 aa).

The 76-residue stretch at 49 to 124 (DIFGGGVLEI…LKVDQVNDDK (76 aa)) folds into the Rho RNA-BD domain. Residues 170–175 (GKGQRG), 182–187 (KAGKTM), and arginine 213 each bind ATP.

Belongs to the Rho family. In terms of assembly, homohexamer. The homohexamer assembles into an open ring structure.

Its function is as follows. Facilitates transcription termination by a mechanism that involves Rho binding to the nascent RNA, activation of Rho's RNA-dependent ATPase activity, and release of the mRNA from the DNA template. This is Transcription termination factor Rho from Haemophilus influenzae (strain ATCC 51907 / DSM 11121 / KW20 / Rd).